Consider the following 339-residue polypeptide: UDP-N-acetylglucosamine/UDP-N-acetylgalactosamine transporter nstp-4 (339 aa).

The next 8 helical transmembrane spans lie at 44-64, 94-114, 148-168, 186-206, 224-244, 255-275, 281-301, and 305-325; these read LSSTAVVCAEIIKLITCFFVI, LKVAVPAIMYVIQNNLLFFAL, YNWMALILLTAGVALVQYPSG, ILGLGAVLAACFSSGFAGVYF, LAFFSVFGALLVCWLYDWQAI, GVIWIVVLLQAYGGLVIALVV, ILKGFAVSLSIILSSFTSWLV, and LTITTTFAIGATVVIFATFLY.

This sequence belongs to the nucleotide-sugar transporter family. SLC35A subfamily. In terms of tissue distribution, widely expressed, including in pharynx and pharyngeal gland cells, seam cells, spermatheca, stomatointestinal muscle, vulva, and body wall muscle.

The protein localises to the golgi apparatus membrane. Its function is as follows. Uridine diphosphate-N-acetylglucosamine (UDP-GlcNAc) transporter in the Golgi apparatus. UDP-N-acetylgalactosamine (UDP-GalNAc) transporter in the Golgi apparatus. Apparently transports UDP-GlcNAc and UDP-GalNAc simultaneously, and independently, by an unknown mechanism. Functions redundantly with nucleotide sugar transporter srf-3. May be involved in gonadal development. The chain is UDP-N-acetylglucosamine/UDP-N-acetylgalactosamine transporter nstp-4 from Caenorhabditis elegans.